The following is a 65-amino-acid chain: Large ribosomal subunit protein bL35 (65 aa).

This sequence belongs to the bacterial ribosomal protein bL35 family.

The protein is Large ribosomal subunit protein bL35 of Prochlorococcus marinus subsp. pastoris (strain CCMP1986 / NIES-2087 / MED4).